A 445-amino-acid polypeptide reads, in one-letter code: tRNA(Ile2) 2-agmatinylcytidine synthetase TiaS (445 aa).

Positions 278–349 (VVVRGSVAEK…KDGLVLNAEY (72 aa)) form a DNA-binding region, OB.

Belongs to the TiaS family.

The protein localises to the cytoplasm. It carries out the reaction cytidine(34) in tRNA(Ile2) + agmatine + ATP + H2O = 2-agmatinylcytidine(34) in tRNA(Ile2) + AMP + 2 phosphate + 2 H(+). Its function is as follows. ATP-dependent agmatine transferase that catalyzes the formation of 2-agmatinylcytidine (agm2C) at the wobble position (C34) of tRNA(Ile2), converting the codon specificity from AUG to AUA. In Thermofilum pendens (strain DSM 2475 / Hrk 5), this protein is tRNA(Ile2) 2-agmatinylcytidine synthetase TiaS.